Consider the following 236-residue polypeptide: Orotidine 5'-phosphate decarboxylase (236 aa).

Substrate-binding positions include Asp17, Lys39, 66–75, Thr125, Arg186, Gln195, Gly215, and Arg216; that span reads DLKFHDIPNT. Catalysis depends on Lys68, which acts as the Proton donor.

It belongs to the OMP decarboxylase family. Type 1 subfamily. As to quaternary structure, homodimer.

The catalysed reaction is orotidine 5'-phosphate + H(+) = UMP + CO2. Its pathway is pyrimidine metabolism; UMP biosynthesis via de novo pathway; UMP from orotate: step 2/2. Its function is as follows. Catalyzes the decarboxylation of orotidine 5'-monophosphate (OMP) to uridine 5'-monophosphate (UMP). This Buchnera aphidicola subsp. Schizaphis graminum (strain Sg) protein is Orotidine 5'-phosphate decarboxylase.